A 238-amino-acid polypeptide reads, in one-letter code: Accessory gene regulator A (238 aa).

Residues K2 to E125 form the Response regulatory domain. 4-aspartylphosphate is present on D59. Residues I143–K238 enclose the HTH LytTR-type domain.

It localises to the cytoplasm. Its function is as follows. Required for high-level post-exponential phase expression of a series of secreted proteins. The polypeptide is Accessory gene regulator A (agrA) (Staphylococcus aureus (strain Mu50 / ATCC 700699)).